Here is a 572-residue protein sequence, read N- to C-terminus: 2-isopropylmalate synthase (572 aa).

Residues 39 to 313 form the Pyruvate carboxyltransferase domain; sequence PVWMSTDLRD…HPGLDFSRIN (275 aa). Residues aspartate 48, histidine 252, histidine 254, and asparagine 288 each coordinate Mg(2+). Residues 445-572 form a regulatory domain region; it reads VAAPYAYVEH…GVGRQVAATR (128 aa).

Belongs to the alpha-IPM synthase/homocitrate synthase family. LeuA type 2 subfamily. As to quaternary structure, homodimer. Mg(2+) is required as a cofactor.

It is found in the cytoplasm. The enzyme catalyses 3-methyl-2-oxobutanoate + acetyl-CoA + H2O = (2S)-2-isopropylmalate + CoA + H(+). It functions in the pathway amino-acid biosynthesis; L-leucine biosynthesis; L-leucine from 3-methyl-2-oxobutanoate: step 1/4. Functionally, catalyzes the condensation of the acetyl group of acetyl-CoA with 3-methyl-2-oxobutanoate (2-ketoisovalerate) to form 3-carboxy-3-hydroxy-4-methylpentanoate (2-isopropylmalate). This chain is 2-isopropylmalate synthase, found in Azoarcus sp. (strain BH72).